Consider the following 400-residue polypeptide: Queuine tRNA-ribosyltransferase (400 aa).

Asp93 serves as the catalytic Proton acceptor. Residues 93 to 97, Asp147, Gln190, and Gly217 each bind substrate; that span reads DSGGF. Positions 248–254 are RNA binding; that stretch reads GVGSPED. The active-site Nucleophile is the Asp267. The segment at 272–276 is RNA binding; important for wobble base 34 recognition; the sequence is TRIAR. Cys305, Cys307, Cys310, and His336 together coordinate Zn(2+). The interval 375–400 is disordered; the sequence is RRERARAAGGAGHAPGPAEPLLPENR. Over residues 388 to 400 the composition is skewed to low complexity; sequence APGPAEPLLPENR.

Belongs to the queuine tRNA-ribosyltransferase family. In terms of assembly, homodimer. Within each dimer, one monomer is responsible for RNA recognition and catalysis, while the other monomer binds to the replacement base PreQ1. Zn(2+) serves as cofactor.

It catalyses the reaction 7-aminomethyl-7-carbaguanine + guanosine(34) in tRNA = 7-aminomethyl-7-carbaguanosine(34) in tRNA + guanine. The protein operates within tRNA modification; tRNA-queuosine biosynthesis. Its function is as follows. Catalyzes the base-exchange of a guanine (G) residue with the queuine precursor 7-aminomethyl-7-deazaguanine (PreQ1) at position 34 (anticodon wobble position) in tRNAs with GU(N) anticodons (tRNA-Asp, -Asn, -His and -Tyr). Catalysis occurs through a double-displacement mechanism. The nucleophile active site attacks the C1' of nucleotide 34 to detach the guanine base from the RNA, forming a covalent enzyme-RNA intermediate. The proton acceptor active site deprotonates the incoming PreQ1, allowing a nucleophilic attack on the C1' of the ribose to form the product. After dissociation, two additional enzymatic reactions on the tRNA convert PreQ1 to queuine (Q), resulting in the hypermodified nucleoside queuosine (7-(((4,5-cis-dihydroxy-2-cyclopenten-1-yl)amino)methyl)-7-deazaguanosine). The protein is Queuine tRNA-ribosyltransferase of Symbiobacterium thermophilum (strain DSM 24528 / JCM 14929 / IAM 14863 / T).